The chain runs to 128 residues: Large ribosomal subunit protein bL17 (128 aa).

It belongs to the bacterial ribosomal protein bL17 family. Part of the 50S ribosomal subunit. Contacts protein L32.

The polypeptide is Large ribosomal subunit protein bL17 (Vibrio cholerae serotype O1 (strain ATCC 39541 / Classical Ogawa 395 / O395)).